The chain runs to 197 residues: Putative methyltransferase Mtx subunit A (197 aa).

It belongs to the MtrA family. In terms of assembly, may be part of a complex composed of 3 subunits; MtxA, MtxH and MtxX.

The protein is Putative methyltransferase Mtx subunit A (mtxA) of Methanosarcina barkeri (strain Fusaro / DSM 804).